The following is an 81-amino-acid chain: Conotoxin ArMKLT2-0311 (81 aa).

The first 22 residues, 1–22, serve as a signal peptide directing secretion; the sequence is MKLTCVLIVALLFLTACQLTTA. Residues 23–34 show a composition bias toward basic and acidic residues; sequence DDSRDKQEDPLV. Positions 23-45 are disordered; the sequence is DDSRDKQEDPLVRSHRKMQKSED. Residues 23-51 constitute a propeptide that is removed on maturation; sequence DDSRDKQEDPLVRSHRKMQKSEDPKMAER. Cystine bridges form between Cys52/Cys67, Cys59/Cys71, and Cys66/Cys80.

It belongs to the conotoxin O1 superfamily. As to expression, expressed by the venom duct.

The protein localises to the secreted. In Conus arenatus (Sand-dusted cone), this protein is Conotoxin ArMKLT2-0311.